Consider the following 784-residue polypeptide: LPS-assembly protein LptD (784 aa).

The N-terminal stretch at 1–24 (MKKRIPTLLATMIATALYSQQGLA) is a signal peptide. 2 disulfides stabilise this stretch: Cys31–Cys724 and Cys173–Cys725.

The protein belongs to the LptD family. As to quaternary structure, component of the lipopolysaccharide transport and assembly complex. Interacts with LptE and LptA. In terms of processing, contains two intramolecular disulfide bonds.

Its subcellular location is the cell outer membrane. Together with LptE, is involved in the assembly of lipopolysaccharide (LPS) at the surface of the outer membrane. The chain is LPS-assembly protein LptD from Escherichia coli O157:H7.